A 377-amino-acid polypeptide reads, in one-letter code: 5-hydroxytryptamine receptor 1D (377 aa).

3 N-linked (GlcNAc...) asparagine glycosylation sites follow: N5, N17, and N21. The next 3 membrane-spanning stretches (helical) occupy residues 39–64 (ISLAVVLSIITVATVLSNTFVLTTIL), 76–97 (LIGSLATTDLLVSILVMPISIA), and 110–134 (LCDIWVSSDITCCTASILHLCVIAL). C111 and C188 are joined by a disulfide. D118 and C122 together coordinate serotonin. Residues 135–137 (DRY) carry the DRY motif; important for ligand-induced conformation changes motif. The next 4 helical transmembrane spans lie at 155–176 (AAAMIAVVWAISICISIPPLFW), 195–218 (ISYTIYSTCGAFYIPSVLLIVLYG), 301–326 (KTLGIILGAFIGCWLPFFVASLVLPI), and 336–359 (GLFDFFTWLGYLNSLINPIIYTVF). S321 is a serotonin binding site. Positions 352 to 356 (NPIIY) match the NPxxY motif; important for ligand-induced conformation changes and signaling motif.

This sequence belongs to the G-protein coupled receptor 1 family. As to quaternary structure, homodimer. Heterodimer with HTR1B.

Its subcellular location is the cell membrane. Functionally, G-protein coupled receptor for 5-hydroxytryptamine (serotonin). Also functions as a receptor for ergot alkaloid derivatives, various anxiolytic and antidepressant drugs and other psychoactive substances. Ligand binding causes a conformation change that triggers signaling via guanine nucleotide-binding proteins (G proteins) and modulates the activity of downstream effectors, such as adenylate cyclase. HTR1D is coupled to G(i)/G(o) G alpha proteins and mediates inhibitory neurotransmission by inhibiting adenylate cyclase activity. Regulates the release of 5-hydroxytryptamine in the brain, and thereby affects neural activity. May also play a role in regulating the release of other neurotransmitters. May play a role in vasoconstriction. The protein is 5-hydroxytryptamine receptor 1D (HTR1D) of Oryctolagus cuniculus (Rabbit).